A 159-amino-acid chain; its full sequence is Nucleotide-binding protein PSPPH_4093 (159 aa).

Belongs to the YajQ family.

Its function is as follows. Nucleotide-binding protein. This is Nucleotide-binding protein PSPPH_4093 from Pseudomonas savastanoi pv. phaseolicola (strain 1448A / Race 6) (Pseudomonas syringae pv. phaseolicola (strain 1448A / Race 6)).